We begin with the raw amino-acid sequence, 156 residues long: Snaclec subunit B (156 aa).

The N-terminal stretch at 1–23 is a signal peptide; sequence MGRSIFVNLGLLVVAFSLRGSEA. 3 disulfide bridges follow: Cys-25-Cys-36, Cys-53-Cys-144, and Cys-119-Cys-136. Residues 32–145 enclose the C-type lectin domain; sequence YDKYCYKVFD…CKSTLPFTCK (114 aa).

The protein belongs to the snaclec family. Heterodimer of subunits A and B; disulfide-linked. Expressed by the venom gland.

It is found in the secreted. Its function is as follows. Interferes with one step of hemostasis (modulation of platelet aggregation, or coagulation cascade, for example). This Philodryas olfersii (Green snake) protein is Snaclec subunit B.